The primary structure comprises 282 residues: 4-hydroxy-tetrahydrodipicolinate reductase (282 aa).

An NAD(+)-binding site is contributed by Gly12–Met17. Arg44 contributes to the NADP(+) binding site. Residues Gly107 to Thr109 and Ser131 to Phe134 contribute to the NAD(+) site. The active-site Proton donor/acceptor is the His164. His165 lines the (S)-2,3,4,5-tetrahydrodipicolinate pocket. Lys168 functions as the Proton donor in the catalytic mechanism. A (S)-2,3,4,5-tetrahydrodipicolinate-binding site is contributed by Gly174–Thr175.

This sequence belongs to the DapB family. Homotetramer.

It is found in the cytoplasm. The enzyme catalyses (S)-2,3,4,5-tetrahydrodipicolinate + NAD(+) + H2O = (2S,4S)-4-hydroxy-2,3,4,5-tetrahydrodipicolinate + NADH + H(+). It carries out the reaction (S)-2,3,4,5-tetrahydrodipicolinate + NADP(+) + H2O = (2S,4S)-4-hydroxy-2,3,4,5-tetrahydrodipicolinate + NADPH + H(+). Its pathway is amino-acid biosynthesis; L-lysine biosynthesis via DAP pathway; (S)-tetrahydrodipicolinate from L-aspartate: step 4/4. Its function is as follows. Catalyzes the conversion of 4-hydroxy-tetrahydrodipicolinate (HTPA) to tetrahydrodipicolinate. The sequence is that of 4-hydroxy-tetrahydrodipicolinate reductase from Blochmanniella pennsylvanica (strain BPEN).